The following is a 358-amino-acid chain: Na(+)/H(+) exchange regulatory cofactor NHE-RF1 (358 aa).

An N-acetylserine modification is found at S2. 2 positions are modified to phosphoserine: S2 and S46. One can recognise a PDZ 1 domain in the interval 14–94 (LCCLEKGPNG…AVRLLVVDPE (81 aa)). Residues 114-132 (QEAPGQAEPPAAAEVQGAG) show a composition bias toward low complexity. Residues 114–192 (QEAPGQAEPP…DPDSPAEASG (79 aa)) are disordered. A compositionally biased stretch (basic and acidic residues) spans 135 to 152 (NEPREADKSHPEQRELRP). A PDZ 2 domain is found at 154-234 (LCTMKKGPSG…ETKLLVVDRE (81 aa)). A phosphoserine mark is found at S162, S269, S280, S290, and S291. The disordered stretch occupies residues 277–358 (ALESPRPALV…SKKNELFSNL (82 aa)). The span at 288–306 (SASSDTSEELNSQDSPPKQ) shows a compositional bias: polar residues. At T293 the chain carries Phosphothreonine. Phosphoserine is present on residues S294, S299, and S302. Residues 307–319 (DSTAPSSTSSSDP) show a composition bias toward low complexity. The span at 348–358 (WSKKNELFSNL) shows a compositional bias: basic and acidic residues.

As to quaternary structure, homodimer, and heterodimer with NHERF2. Binds the N-termini of EZR, RDX and MSN. Binds the C-termini of PDGFRA, PDGFRB, ADRB2, NOS2 and CFTR. Binds ARHGAP17, EPI64, RACK1, OPRK1, GNAQ, CTNNB1 and PLCB3. Binds PDZK1. Interacts with CLCN3. Binds the C-terminus of PAG1. In resting T-cells, part of a PAG1-NHERF1-MSN complex which is disrupted upon TCR activation. Forms a complex with CFTR and SLC4A7. Forms a complex with SLC4A7 and ATP6V1B1. Interacts with TRPC4 (via the PDZ-binding domain). Directly interacts with HTR4. Interacts (via the PDZ 1 domain) with PODXL (via the C-terminal PDZ-binding motif DTHL); interaction is not detected in glomerular epithelium cells. Interacts (via the PDZ 1 domain) with PODXL (via the C-terminal PDZ-binding motif DTHL); the interaction take place early in the secretory pathway and is necessary for its apical membrane sorting. Interacts with SLC26A3. Interacts with MCC. Interacts with SLC34A1. Interacts (via the PDZ domains) with SLC26A6 isoform 4 and isoform 5. Interacts (via PDZ domains) with ACE2 (via PDZ-binding motif); the interaction may enhance ACE2 membrane residence. Phosphorylated on serine residues. In terms of tissue distribution, detected in liver, kidney, pancreas, prostate, spleen, small intestine and placenta, in particular in the syncytiotrophoblast.

It is found in the cytoplasm. It localises to the apical cell membrane. The protein resides in the endomembrane system. Its subcellular location is the cell projection. The protein localises to the filopodium. It is found in the ruffle. It localises to the microvillus. Its function is as follows. Scaffold protein that connects plasma membrane proteins with members of the ezrin/moesin/radixin family and thereby helps to link them to the actin cytoskeleton and to regulate their surface expression. Necessary for recycling of internalized ADRB2. Was first known to play a role in the regulation of the activity and subcellular location of SLC9A3. Necessary for cAMP-mediated phosphorylation and inhibition of SLC9A3. May enhance Wnt signaling. May participate in HTR4 targeting to microvilli. Involved in the regulation of phosphate reabsorption in the renal proximal tubules. Involved in sperm capacitation. May participate in the regulation of the chloride and bicarbonate homeostasis in spermatozoa. In Homo sapiens (Human), this protein is Na(+)/H(+) exchange regulatory cofactor NHE-RF1.